The sequence spans 96 residues: Co-chaperonin GroES 1 (96 aa).

It belongs to the GroES chaperonin family. Heptamer of 7 subunits arranged in a ring. Interacts with the chaperonin GroEL.

It localises to the cytoplasm. Its function is as follows. Together with the chaperonin GroEL, plays an essential role in assisting protein folding. The GroEL-GroES system forms a nano-cage that allows encapsulation of the non-native substrate proteins and provides a physical environment optimized to promote and accelerate protein folding. GroES binds to the apical surface of the GroEL ring, thereby capping the opening of the GroEL channel. This Vibrio vulnificus (strain CMCP6) protein is Co-chaperonin GroES 1.